Here is a 458-residue protein sequence, read N- to C-terminus: UDP-N-acetylmuramoylalanine--D-glutamate ligase (458 aa).

ATP is bound at residue 119-125; sequence GSNGKTT.

It belongs to the MurCDEF family.

Its subcellular location is the cytoplasm. The enzyme catalyses UDP-N-acetyl-alpha-D-muramoyl-L-alanine + D-glutamate + ATP = UDP-N-acetyl-alpha-D-muramoyl-L-alanyl-D-glutamate + ADP + phosphate + H(+). Its pathway is cell wall biogenesis; peptidoglycan biosynthesis. Cell wall formation. Catalyzes the addition of glutamate to the nucleotide precursor UDP-N-acetylmuramoyl-L-alanine (UMA). This Limosilactobacillus fermentum (strain NBRC 3956 / LMG 18251) (Lactobacillus fermentum) protein is UDP-N-acetylmuramoylalanine--D-glutamate ligase.